A 508-amino-acid polypeptide reads, in one-letter code: Light-independent protochlorophyllide reductase subunit B (508 aa).

Asp36 serves as a coordination point for [4Fe-4S] cluster. Asp294 acts as the Proton donor in catalysis. A substrate-binding site is contributed by 429–430 (GM).

The protein belongs to the ChlB/BchB/BchZ family. Protochlorophyllide reductase is composed of three subunits; ChlL, ChlN and ChlB. Forms a heterotetramer of two ChlB and two ChlN subunits. The cofactor is [4Fe-4S] cluster.

The catalysed reaction is chlorophyllide a + oxidized 2[4Fe-4S]-[ferredoxin] + 2 ADP + 2 phosphate = protochlorophyllide a + reduced 2[4Fe-4S]-[ferredoxin] + 2 ATP + 2 H2O. Its pathway is porphyrin-containing compound metabolism; chlorophyll biosynthesis (light-independent). In terms of biological role, component of the dark-operative protochlorophyllide reductase (DPOR) that uses Mg-ATP and reduced ferredoxin to reduce ring D of protochlorophyllide (Pchlide) to form chlorophyllide a (Chlide). This reaction is light-independent. The NB-protein (ChlN-ChlB) is the catalytic component of the complex. The polypeptide is Light-independent protochlorophyllide reductase subunit B (Nostoc sp. (strain PCC 7120 / SAG 25.82 / UTEX 2576)).